We begin with the raw amino-acid sequence, 149 residues long: Myoglobin (149 aa).

The residue at position 2 (threonine 2) is an N-acetylthreonine. The Globin domain maps to 2 to 143 (TEWEHVNKVW…ICSDLETLYK (142 aa)). Residue histidine 60 participates in nitrite binding. Residue histidine 60 participates in O2 binding. Histidine 89 serves as a coordination point for heme b.

Belongs to the globin family. In terms of assembly, monomeric.

Its subcellular location is the cytoplasm. It localises to the sarcoplasm. The enzyme catalyses Fe(III)-heme b-[protein] + nitric oxide + H2O = Fe(II)-heme b-[protein] + nitrite + 2 H(+). It carries out the reaction H2O2 + AH2 = A + 2 H2O. Functionally, monomeric heme protein which primary function is to store oxygen and facilitate its diffusion within muscle tissues. Reversibly binds oxygen through a pentacoordinated heme iron and enables its timely and efficient release as needed during periods of heightened demand. Depending on the oxidative conditions of tissues and cells, and in addition to its ability to bind oxygen, it also has a nitrite reductase activity whereby it regulates the production of bioactive nitric oxide. Under stress conditions, like hypoxia and anoxia, it also protects cells against reactive oxygen species thanks to its pseudoperoxidase activity. In Heterodontus portusjacksoni (Port Jackson shark), this protein is Myoglobin (mb).